The chain runs to 393 residues: Arginine biosynthesis bifunctional protein ArgJ (393 aa).

Substrate-binding residues include Thr145, Lys171, Thr182, Glu265, Asn388, and Ser393. Thr182 acts as the Nucleophile in catalysis.

The protein belongs to the ArgJ family. In terms of assembly, heterotetramer of two alpha and two beta chains.

It is found in the cytoplasm. The enzyme catalyses N(2)-acetyl-L-ornithine + L-glutamate = N-acetyl-L-glutamate + L-ornithine. The catalysed reaction is L-glutamate + acetyl-CoA = N-acetyl-L-glutamate + CoA + H(+). Its pathway is amino-acid biosynthesis; L-arginine biosynthesis; L-ornithine and N-acetyl-L-glutamate from L-glutamate and N(2)-acetyl-L-ornithine (cyclic): step 1/1. The protein operates within amino-acid biosynthesis; L-arginine biosynthesis; N(2)-acetyl-L-ornithine from L-glutamate: step 1/4. Catalyzes two activities which are involved in the cyclic version of arginine biosynthesis: the synthesis of N-acetylglutamate from glutamate and acetyl-CoA as the acetyl donor, and of ornithine by transacetylation between N(2)-acetylornithine and glutamate. In Nitratidesulfovibrio vulgaris (strain ATCC 29579 / DSM 644 / CCUG 34227 / NCIMB 8303 / VKM B-1760 / Hildenborough) (Desulfovibrio vulgaris), this protein is Arginine biosynthesis bifunctional protein ArgJ.